Here is a 223-residue protein sequence, read N- to C-terminus: UPF0441 protein YgiB (223 aa).

Residues 178–195 are compositionally biased toward low complexity; that stretch reads TVPKTAMAPKPATTTTVT. Residues 178–223 are disordered; the sequence is TVPKTAMAPKPATTTTVTRGGFGESVAKQSTMQRGATGTSSRSMGG. The span at 204 to 223 shows a compositional bias: polar residues; the sequence is AKQSTMQRGATGTSSRSMGG.

The protein belongs to the UPF0441 family.

This chain is UPF0441 protein YgiB, found in Escherichia coli O6:K15:H31 (strain 536 / UPEC).